We begin with the raw amino-acid sequence, 502 residues long: Probable mitochondrial-processing peptidase subunit alpha (502 aa).

This sequence belongs to the peptidase M16 family. Heterodimer of mas2 (alpha) and mas1 (beta) subunits, forming the mitochondrial processing protease (MPP) in which mas2 is involved in substrate recognition and binding and mas1 is the catalytic subunit.

Its subcellular location is the mitochondrion matrix. Its function is as follows. Substrate recognition and binding subunit of the essential mitochondrial processing protease (MPP), which cleaves the mitochondrial sequence off newly imported precursors proteins. This chain is Probable mitochondrial-processing peptidase subunit alpha (mas2), found in Schizosaccharomyces pombe (strain 972 / ATCC 24843) (Fission yeast).